The following is a 138-amino-acid chain: Putative pre-16S rRNA nuclease (138 aa).

This sequence belongs to the YqgF nuclease family.

The protein localises to the cytoplasm. In terms of biological role, could be a nuclease involved in processing of the 5'-end of pre-16S rRNA. This is Putative pre-16S rRNA nuclease from Clostridium beijerinckii (strain ATCC 51743 / NCIMB 8052) (Clostridium acetobutylicum).